Here is a 245-residue protein sequence, read N- to C-terminus: Probable transcriptional regulatory protein SUN_1622 (245 aa).

This sequence belongs to the TACO1 family.

It localises to the cytoplasm. The protein is Probable transcriptional regulatory protein SUN_1622 of Sulfurovum sp. (strain NBC37-1).